Here is a 127-residue protein sequence, read N- to C-terminus: Fluoride-specific ion channel FluC (127 aa).

The next 4 helical transmembrane spans lie at 4 to 24, 36 to 56, 68 to 88, and 98 to 118; these read PILAIALGSTLGGLLRWGLGL, GTLVANLIAGYVVGVAIAFFA, LVITGFCGGLSTFSTFSAEIV, and WAMSAIAVHVAGSLIMTLAGI. Residues glycine 75 and serine 78 each coordinate Na(+).

Belongs to the fluoride channel Fluc/FEX (TC 1.A.43) family.

The protein resides in the cell inner membrane. It catalyses the reaction fluoride(in) = fluoride(out). Na(+) is not transported, but it plays an essential structural role and its presence is essential for fluoride channel function. In terms of biological role, fluoride-specific ion channel. Important for reducing fluoride concentration in the cell, thus reducing its toxicity. The protein is Fluoride-specific ion channel FluC of Nitrosomonas europaea (strain ATCC 19718 / CIP 103999 / KCTC 2705 / NBRC 14298).